Consider the following 236-residue polypeptide: tRNA (guanine-N(1)-)-methyltransferase (236 aa).

Residues glycine 112 and 132–137 (VGDFIL) each bind S-adenosyl-L-methionine.

It belongs to the RNA methyltransferase TrmD family. Homodimer.

The protein resides in the cytoplasm. It catalyses the reaction guanosine(37) in tRNA + S-adenosyl-L-methionine = N(1)-methylguanosine(37) in tRNA + S-adenosyl-L-homocysteine + H(+). Specifically methylates guanosine-37 in various tRNAs. The polypeptide is tRNA (guanine-N(1)-)-methyltransferase (Campylobacter curvus (strain 525.92)).